Here is an 813-residue protein sequence, read N- to C-terminus: Kinesin-like protein KIN-8B (813 aa).

One can recognise a Kinesin motor domain in the interval 14–345; the sequence is TLTVAVKCRP…LKYADRAKEI (332 aa). 104–111 is an ATP binding site; the sequence is GSTGSGKT. Positions 349-391 form a coiled coil; the sequence is IQKNIGTIDTHMSDYQRMIDNLQSEVSQLKTQLAEKESQLSIK. 2 disordered regions span residues 664–694 and 756–813; these read GSRP…PRMA and AVST…RQHQ. 3 stretches are compositionally biased toward polar residues: residues 682–694, 761–791, and 804–813; these read YPQT…PRMA, GARN…NSHT, and KGNNTQRQHQ.

It belongs to the TRAFAC class myosin-kinesin ATPase superfamily. Kinesin family. KIN-8 subfamily.

This chain is Kinesin-like protein KIN-8B, found in Arabidopsis thaliana (Mouse-ear cress).